Here is a 422-residue protein sequence, read N- to C-terminus: Glutamyl-tRNA reductase (422 aa).

Residues 49–52, Ser110, 115–117, and Gln121 contribute to the substrate site; these read TCNR and EPQ. The active-site Nucleophile is the Cys50. 190–195 lines the NADP(+) pocket; that stretch reads GAGETI.

The protein belongs to the glutamyl-tRNA reductase family. As to quaternary structure, homodimer.

It carries out the reaction (S)-4-amino-5-oxopentanoate + tRNA(Glu) + NADP(+) = L-glutamyl-tRNA(Glu) + NADPH + H(+). It participates in porphyrin-containing compound metabolism; protoporphyrin-IX biosynthesis; 5-aminolevulinate from L-glutamyl-tRNA(Glu): step 1/2. Catalyzes the NADPH-dependent reduction of glutamyl-tRNA(Glu) to glutamate 1-semialdehyde (GSA). The sequence is that of Glutamyl-tRNA reductase from Colwellia psychrerythraea (strain 34H / ATCC BAA-681) (Vibrio psychroerythus).